The sequence spans 292 residues: 4-hydroxybenzoate octaprenyltransferase (292 aa).

8 consecutive transmembrane segments (helical) span residues Pro-23–Gly-43, Pro-47–Ile-67, Leu-98–Leu-118, His-141–Ala-161, Gly-164–Tyr-184, Tyr-211–Gly-231, Tyr-233–Tyr-253, and Phe-270–Trp-290.

This sequence belongs to the UbiA prenyltransferase family. Requires Mg(2+) as cofactor.

It is found in the cell inner membrane. The enzyme catalyses all-trans-octaprenyl diphosphate + 4-hydroxybenzoate = 4-hydroxy-3-(all-trans-octaprenyl)benzoate + diphosphate. Its pathway is cofactor biosynthesis; ubiquinone biosynthesis. In terms of biological role, catalyzes the prenylation of para-hydroxybenzoate (PHB) with an all-trans polyprenyl group. Mediates the second step in the final reaction sequence of ubiquinone-8 (UQ-8) biosynthesis, which is the condensation of the polyisoprenoid side chain with PHB, generating the first membrane-bound Q intermediate 3-octaprenyl-4-hydroxybenzoate. The protein is 4-hydroxybenzoate octaprenyltransferase of Methylococcus capsulatus (strain ATCC 33009 / NCIMB 11132 / Bath).